The following is a 532-amino-acid chain: MAKRVAIVGAGVSGLASIKCCLEEGLEPTCFERSDDLGGLWRFTEHVEEGRASLYKSVVSNSCKEMSCYSDFPFPEDYPNYVPNSQFLEYLKMYANRFSLLKCIRFKTKVCKVTKCPDFTVTGQWEVVTQHEGKQESAIFDAVMVCTGFLTNPHLPLDCFPGINTFKGQYFHSRQYKHPDIFKDKRVLVIGMGNSGTDIAVETSRLAKKVFLSTTGGAWVMSRVFDSGYPWDMVFMTRFQNMFRNSLPTPIVTWLMARKMNSWFNHANYGLVPEDRTQLREPVLNDELPGCIITGKVLIKPSIKEVKENSVVFNNTPKEEPIDIIVFATGYTFAFPFLDETVVKVENGQASLYKYIFPVHLPKPTLAVIGLIKPLGSMIPTGETQARWAVRVLKGINKLPPQSAMTEEVNARKENKPSGFGLCYCKALQSDYITYIDELLTNINAKPNLFSLLLTDPRLALTIFFGPCTPYQFRLTGPGKWKGARNAILTQWDRTFKVTKTRIVQESPTPFASLLKLLSLLALLMAIFLIFL.

Ala2 is modified (N-acetylalanine). The Lumenal segment spans residues 2-510 (AKRVAIVGAG…TRIVQESPTP (509 aa)). FAD is bound by residues 9 to 13 (GAGVS), Glu32, 40 to 41 (LW), and 61 to 62 (NS). NADP(+) is bound by residues 60 to 61 (SN) and 195 to 198 (SGTD). A helical membrane pass occupies residues 511–531 (FASLLKLLSLLALLMAIFLIF). Leu532 is a topological domain (cytoplasmic).

The protein belongs to the FMO family. Requires FAD as cofactor. In terms of tissue distribution, liver.

Its subcellular location is the endoplasmic reticulum membrane. The catalysed reaction is hypotaurine + NADPH + O2 + H(+) = taurine + NADP(+) + H2O. It carries out the reaction hypotaurine + NADH + O2 + H(+) = taurine + NAD(+) + H2O. It catalyses the reaction trimethylamine + NADPH + O2 = trimethylamine N-oxide + NADP(+) + H2O. The enzyme catalyses N,N-dimethylaniline + NADPH + O2 + H(+) = N,N-dimethylaniline N-oxide + NADP(+) + H2O. Functionally, broad spectrum monooxygenase that catalyzes the oxygenation of a wide variety of nitrogen- and sulfur-containing compounds including xenobiotics. Catalyzes the S-oxygenation of hypotaurine to produce taurine, an organic osmolyte involved in cell volume regulation as well as a variety of cytoprotective and developmental processes. In vitro, catalyzes the N-oxygenation of trimethylamine (TMA) to produce trimethylamine N-oxide (TMAO) and could therefore participate to the detoxification of this compound that is generated by the action of gut microbiota from dietary precursors such as choline, choline containing compounds, betaine or L-carnitine. This Canis lupus familiaris (Dog) protein is Flavin-containing monooxygenase 1 (FMO1).